Reading from the N-terminus, the 151-residue chain is UPF0756 membrane protein GK2737 (151 aa).

A run of 4 helical transmembrane segments spans residues 5 to 25 (VLFL…SLIV), 53 to 73 (WGVT…EIGF), 79 to 99 (SLQS…ALIA), and 121 to 141 (ILAV…AGIA).

This sequence belongs to the UPF0756 family.

Its subcellular location is the cell membrane. This Geobacillus kaustophilus (strain HTA426) protein is UPF0756 membrane protein GK2737.